Here is a 237-residue protein sequence, read N- to C-terminus: Ribonuclease PH (237 aa).

Phosphate is bound by residues Arg-86 and 124-126; that span reads GTR.

The protein belongs to the RNase PH family. As to quaternary structure, homohexameric ring arranged as a trimer of dimers.

It carries out the reaction tRNA(n+1) + phosphate = tRNA(n) + a ribonucleoside 5'-diphosphate. Phosphorolytic 3'-5' exoribonuclease that plays an important role in tRNA 3'-end maturation. Removes nucleotide residues following the 3'-CCA terminus of tRNAs; can also add nucleotides to the ends of RNA molecules by using nucleoside diphosphates as substrates, but this may not be physiologically important. Probably plays a role in initiation of 16S rRNA degradation (leading to ribosome degradation) during starvation. This is Ribonuclease PH from Shewanella sp. (strain W3-18-1).